Reading from the N-terminus, the 289-residue chain is Nucleotide-binding protein Francci3_1634 (289 aa).

Residue 13-20 (GLSGAGRS) participates in ATP binding. 64–67 (DVRG) contributes to the GTP binding site.

Belongs to the RapZ-like family.

Its function is as follows. Displays ATPase and GTPase activities. The polypeptide is Nucleotide-binding protein Francci3_1634 (Frankia casuarinae (strain DSM 45818 / CECT 9043 / HFP020203 / CcI3)).